Reading from the N-terminus, the 265-residue chain is Ribosomal RNA small subunit methyltransferase A (265 aa).

The S-adenosyl-L-methionine site is built by H17, L19, G44, E65, D90, and N112.

This sequence belongs to the class I-like SAM-binding methyltransferase superfamily. rRNA adenine N(6)-methyltransferase family. RsmA subfamily.

It localises to the cytoplasm. The enzyme catalyses adenosine(1518)/adenosine(1519) in 16S rRNA + 4 S-adenosyl-L-methionine = N(6)-dimethyladenosine(1518)/N(6)-dimethyladenosine(1519) in 16S rRNA + 4 S-adenosyl-L-homocysteine + 4 H(+). Its function is as follows. Specifically dimethylates two adjacent adenosines (A1518 and A1519) in the loop of a conserved hairpin near the 3'-end of 16S rRNA in the 30S particle. May play a critical role in biogenesis of 30S subunits. The sequence is that of Ribosomal RNA small subunit methyltransferase A from Xylella fastidiosa (strain Temecula1 / ATCC 700964).